The sequence spans 211 residues: ATP phosphoribosyltransferase (211 aa).

It belongs to the ATP phosphoribosyltransferase family. Short subfamily. Heteromultimer composed of HisG and HisZ subunits.

Its subcellular location is the cytoplasm. It carries out the reaction 1-(5-phospho-beta-D-ribosyl)-ATP + diphosphate = 5-phospho-alpha-D-ribose 1-diphosphate + ATP. The protein operates within amino-acid biosynthesis; L-histidine biosynthesis; L-histidine from 5-phospho-alpha-D-ribose 1-diphosphate: step 1/9. Functionally, catalyzes the condensation of ATP and 5-phosphoribose 1-diphosphate to form N'-(5'-phosphoribosyl)-ATP (PR-ATP). Has a crucial role in the pathway because the rate of histidine biosynthesis seems to be controlled primarily by regulation of HisG enzymatic activity. The polypeptide is ATP phosphoribosyltransferase (Pseudomonas paraeruginosa (strain DSM 24068 / PA7) (Pseudomonas aeruginosa (strain PA7))).